Here is a 383-residue protein sequence, read N- to C-terminus: Nuclear hormone receptor family member nhr-217 (383 aa).

Positions 53–127 (IPACPVCDVP…AGLQRDYVRQ (75 aa)) form a DNA-binding region, nuclear receptor. 2 consecutive NR C4-type zinc fingers follow at residues 56–77 (CPVC…CAAC) and 93–109 (CKRE…CRAC). The region spanning 172–383 (ILKVSNSSLF…KLYVQIGIPF (212 aa)) is the NR LBD domain.

The protein belongs to the nuclear hormone receptor family.

It is found in the nucleus. Orphan nuclear receptor. In Caenorhabditis elegans, this protein is Nuclear hormone receptor family member nhr-217 (nhr-217).